The sequence spans 311 residues: Uridine phosphorylase 1 (311 aa).

Phosphate contacts are provided by residues glycine 61, arginine 95, and 139-142 (RIGT). Uridine-binding positions include 143-144 (SG) and 218-220 (QGR).

The protein belongs to the PNP/UDP phosphorylase family. As to quaternary structure, homodimer. Post-translationally, the N-terminus is blocked.

It catalyses the reaction uridine + phosphate = alpha-D-ribose 1-phosphate + uracil. The catalysed reaction is 2'-deoxyuridine + phosphate = 2-deoxy-alpha-D-ribose 1-phosphate + uracil. The protein operates within pyrimidine metabolism; UMP biosynthesis via salvage pathway; uracil from uridine (phosphorylase route): step 1/1. With respect to regulation, strongly inhibited by 2,2'-anhydro-5-ethyluridine, a competitive inhibitor. Catalyzes the reversible phosphorylytic cleavage of uridine to uracil and ribose-1-phosphate which can then be utilized as carbon and energy sources or in the rescue of pyrimidine bases for nucleotide synthesis. Shows broad substrate specificity and can also accept deoxyuridine and other analogous compounds. The polypeptide is Uridine phosphorylase 1 (Mus musculus (Mouse)).